The chain runs to 401 residues: 1-deoxy-D-xylulose 5-phosphate reductoisomerase (401 aa).

Residues Thr11, Gly12, Ser13, Ile14, Arg38, Asn39, and Asn125 each contribute to the NADPH site. Residue Lys126 coordinates 1-deoxy-D-xylulose 5-phosphate. An NADPH-binding site is contributed by Glu127. Residue Asp151 participates in Mn(2+) binding. 1-deoxy-D-xylulose 5-phosphate is bound by residues Ser152, Glu153, Ser179, and His202. A Mn(2+)-binding site is contributed by Glu153. Gly208 contributes to the NADPH binding site. Positions 215, 220, 221, and 224 each coordinate 1-deoxy-D-xylulose 5-phosphate. A Mn(2+)-binding site is contributed by Glu224.

This sequence belongs to the DXR family. Mg(2+) is required as a cofactor. Mn(2+) serves as cofactor.

It catalyses the reaction 2-C-methyl-D-erythritol 4-phosphate + NADP(+) = 1-deoxy-D-xylulose 5-phosphate + NADPH + H(+). It functions in the pathway isoprenoid biosynthesis; isopentenyl diphosphate biosynthesis via DXP pathway; isopentenyl diphosphate from 1-deoxy-D-xylulose 5-phosphate: step 1/6. Functionally, catalyzes the NADPH-dependent rearrangement and reduction of 1-deoxy-D-xylulose-5-phosphate (DXP) to 2-C-methyl-D-erythritol 4-phosphate (MEP). The chain is 1-deoxy-D-xylulose 5-phosphate reductoisomerase from Paraburkholderia phymatum (strain DSM 17167 / CIP 108236 / LMG 21445 / STM815) (Burkholderia phymatum).